The primary structure comprises 432 residues: Glutamyl-tRNA reductase (432 aa).

Substrate contacts are provided by residues 49–52 (TCNR), serine 101, 106–108 (ESQ), and glutamine 112. Cysteine 50 functions as the Nucleophile in the catalytic mechanism. 181-186 (GTGETI) contacts NADP(+). The disordered stretch occupies residues 410–432 (KPGYHHPTLQTTIVKTDETDPAS).

Belongs to the glutamyl-tRNA reductase family. As to quaternary structure, homodimer.

The catalysed reaction is (S)-4-amino-5-oxopentanoate + tRNA(Glu) + NADP(+) = L-glutamyl-tRNA(Glu) + NADPH + H(+). It participates in porphyrin-containing compound metabolism; protoporphyrin-IX biosynthesis; 5-aminolevulinate from L-glutamyl-tRNA(Glu): step 1/2. Its function is as follows. Catalyzes the NADPH-dependent reduction of glutamyl-tRNA(Glu) to glutamate 1-semialdehyde (GSA). The sequence is that of Glutamyl-tRNA reductase from Xylella fastidiosa (strain 9a5c).